The sequence spans 356 residues: Histidinol-phosphate aminotransferase 1 (356 aa).

Lys210 bears the N6-(pyridoxal phosphate)lysine mark.

This sequence belongs to the class-II pyridoxal-phosphate-dependent aminotransferase family. Histidinol-phosphate aminotransferase subfamily. In terms of assembly, homodimer. Pyridoxal 5'-phosphate is required as a cofactor.

The catalysed reaction is L-histidinol phosphate + 2-oxoglutarate = 3-(imidazol-4-yl)-2-oxopropyl phosphate + L-glutamate. The protein operates within amino-acid biosynthesis; L-histidine biosynthesis; L-histidine from 5-phospho-alpha-D-ribose 1-diphosphate: step 7/9. This chain is Histidinol-phosphate aminotransferase 1, found in Hydrogenovibrio crunogenus (strain DSM 25203 / XCL-2) (Thiomicrospira crunogena).